A 123-amino-acid chain; its full sequence is Small ribosomal subunit protein uS12 (123 aa).

D89 is subject to 3-methylthioaspartic acid. Positions 103 to 123 are disordered; that stretch reads DTSGVQDRRQGRSKYGAKRPK. Residues 113–123 show a composition bias toward basic residues; the sequence is GRSKYGAKRPK.

Belongs to the universal ribosomal protein uS12 family. As to quaternary structure, part of the 30S ribosomal subunit. Contacts proteins S8 and S17. May interact with IF1 in the 30S initiation complex.

Its function is as follows. With S4 and S5 plays an important role in translational accuracy. In terms of biological role, interacts with and stabilizes bases of the 16S rRNA that are involved in tRNA selection in the A site and with the mRNA backbone. Located at the interface of the 30S and 50S subunits, it traverses the body of the 30S subunit contacting proteins on the other side and probably holding the rRNA structure together. The combined cluster of proteins S8, S12 and S17 appears to hold together the shoulder and platform of the 30S subunit. The chain is Small ribosomal subunit protein uS12 from Nitratidesulfovibrio vulgaris (strain ATCC 29579 / DSM 644 / CCUG 34227 / NCIMB 8303 / VKM B-1760 / Hildenborough) (Desulfovibrio vulgaris).